The chain runs to 187 residues: Biphenyl 2,3-dioxygenase subunit beta (187 aa).

It belongs to the bacterial ring-hydroxylating dioxygenase beta subunit family. As to quaternary structure, heterohexamer consisting of three BphA1 subunits and three BphA2 subunits. The multicomponent biphenyl dioxygenase system is composed of a ferredoxin reductase (BphA4), a ferredoxin (BphA3), and a terminal oxygenase (BphA1A2).

It carries out the reaction biphenyl + NADH + O2 + H(+) = (2R,3S)-3-phenylcyclohexa-3,5-diene-1,2-diol + NAD(+). It functions in the pathway xenobiotic degradation; biphenyl degradation; 2-hydroxy-2,4-pentadienoate and benzoate from biphenyl: step 1/4. Its function is as follows. Part of the oxygenase component of the biphenyl dioxygenase system that catalyzes the stereospecific dihydroxylation of the aromatic ring of biphenyl, yielding a dihydrodiol compound. Is likely involved in biphenyl degradation that allows growth of Rhodococcus sp. strain RHA1 on biphenyl as the sole source of carbon and energy. Can also use naphtalene and 4-chlorobiphenyl (4-CB) as substrates, as well as some polychlorinated biphenyls (PCB) such as 2,2'-dichlorobiphenyl, 2,3-dichlorobiphenyl and 2,5,2'-trichlorobiphenyl. Exhibits weak activity toward dibenzofuran and dibenzo-p-dioxin. Electrons are transferred from NADH to the [2Fe-2S] cluster in BphA1 via FAD of BphA4 and [2Fe-2S] cluster of BphA3. The protein is Biphenyl 2,3-dioxygenase subunit beta of Rhodococcus jostii (strain RHA1).